The sequence spans 478 residues: Zinc metalloproteinase/disintegrin (478 aa).

The N-terminal stretch at 1-20 (MIQVLLVTICLAAFPYQGSS) is a signal peptide. Positions 21–187 (IILESGNVND…PIKKASDLNL (167 aa)) are excised as a propeptide. Residues 193–389 (RYVELFIVVD…QKPQCILKKP (197 aa)) enclose the Peptidase M12B domain. Disulfide bonds link cysteine 304/cysteine 384, cysteine 344/cysteine 368, and cysteine 346/cysteine 351. Histidine 329 lines the Zn(2+) pocket. Glutamate 330 is an active-site residue. Zn(2+) contacts are provided by histidine 333 and histidine 339. A propeptide spanning residues 390–407 (LRTDTVSTPVSGNELLEA) is cleaved from the precursor. One can recognise a Disintegrin domain in the interval 397–478 (TPVSGNELLE…ADCPRNGLYG (82 aa)). Cystine bridges form between cysteine 411–cysteine 426, cysteine 413–cysteine 421, cysteine 420–cysteine 443, cysteine 434–cysteine 440, cysteine 439–cysteine 464, and cysteine 452–cysteine 471. The short motif at 456-458 (MVD) is the Cell attachment site; atypical (MVD) element.

This sequence belongs to the venom metalloproteinase (M12B) family. P-II subfamily. P-IIa sub-subfamily. In terms of assembly, monomer (disintegrin). Requires Zn(2+) as cofactor. Expressed by the venom gland.

It localises to the secreted. It catalyses the reaction Cleavage of 3-Asn-|-Gln-4, 9-Ser-|-His-10 and 14-Ala-|-Leu-15 bonds in insulin B chain and 14-Tyr-|-Gln-15 and 8-Thr-|-Ser-9 in A chain. Cleaves type IV collagen at 73-Ala-|-Gln-74 in alpha1-(IV) and at 7-Gly-|-Leu-8 in alpha2-(IV).. Snake venom zinc metalloproteinase that causes hemorrhage by provoking the degradation of the sub-endothelial matrix proteins (fibronectin, laminin, type IV collagen, nidogen, and gelatins). Functionally, potent inhibitor of both collagen- (IC(50)=4 nM) and ADP-induced (IC(50)=8 nM) platelet aggregation. May act by binding to the platelet receptor GPIIb/GPIIIa (ITGA2B/ITGB3). The sequence is that of Zinc metalloproteinase/disintegrin from Crotalus atrox (Western diamondback rattlesnake).